Here is a 542-residue protein sequence, read N- to C-terminus: MAKDIKFSADARAAMVRGVDILADTVKVTLGPKGRNVVLEKAFGSPLITNDGVTIAKEIELEDHFENMGAKLVSEVASKTNDIAGDGTTTATVLTQAIVREGLKNVTAGANPIGIRRGIEKATSAAVEELKAIAQPVSGKEAIAQVAAVSSRSEKVGEYISEAMERVGNDGVITIEESRGMETELEVVEGMQFDRGYLSQYMVTDNEKMVADLENPFILITDKKVSNIQEILPLLEEVLKTSRPLLIIADDVDGEALPTLVLNKIRGTFNVVAVKAPGFGDRRKAMLEDIAILTGGTVITEDLGLDLKDATIAALGQAAKVTVDKDSTVIVEGAGSAEAIANRVGLIKSQLETTTSEFDREKLQERLAKLAGGVAVIKVGAATETELKEMKLRIEDALNATRAAVEEGIVSGGGTALVTVIDKVAALELTGDEATGRNIVLRALEEPVRQIAYNAGYEGSVVIDKLKNSPVGTGFNAATGDWVDMIETGIIDPVKVTRSALQNAASVASLILTTEAVVANKPEPAAPAMPGGMDPSMMGGMM.

Residues 29-32 (TLGP), 86-90 (DGTTT), G413, 476-478 (NAA), and D492 contribute to the ATP site. The tract at residues 523 to 542 (EPAAPAMPGGMDPSMMGGMM) is disordered. Positions 526–542 (APAMPGGMDPSMMGGMM) are enriched in low complexity.

It belongs to the chaperonin (HSP60) family. As to quaternary structure, forms a cylinder of 14 subunits composed of two heptameric rings stacked back-to-back. Interacts with the co-chaperonin GroES.

It localises to the cytoplasm. It carries out the reaction ATP + H2O + a folded polypeptide = ADP + phosphate + an unfolded polypeptide.. Functionally, together with its co-chaperonin GroES, plays an essential role in assisting protein folding. The GroEL-GroES system forms a nano-cage that allows encapsulation of the non-native substrate proteins and provides a physical environment optimized to promote and accelerate protein folding. This is Chaperonin GroEL from Streptococcus uberis (strain ATCC BAA-854 / 0140J).